Consider the following 180-residue polypeptide: ATP synthase subunit delta (180 aa).

The protein belongs to the ATPase delta chain family. F-type ATPases have 2 components, F(1) - the catalytic core - and F(0) - the membrane proton channel. F(1) has five subunits: alpha(3), beta(3), gamma(1), delta(1), epsilon(1). F(0) has three main subunits: a(1), b(2) and c(10-14). The alpha and beta chains form an alternating ring which encloses part of the gamma chain. F(1) is attached to F(0) by a central stalk formed by the gamma and epsilon chains, while a peripheral stalk is formed by the delta and b chains.

It is found in the cell membrane. F(1)F(0) ATP synthase produces ATP from ADP in the presence of a proton or sodium gradient. F-type ATPases consist of two structural domains, F(1) containing the extramembraneous catalytic core and F(0) containing the membrane proton channel, linked together by a central stalk and a peripheral stalk. During catalysis, ATP synthesis in the catalytic domain of F(1) is coupled via a rotary mechanism of the central stalk subunits to proton translocation. In terms of biological role, this protein is part of the stalk that links CF(0) to CF(1). It either transmits conformational changes from CF(0) to CF(1) or is implicated in proton conduction. The protein is ATP synthase subunit delta of Limosilactobacillus reuteri (strain DSM 20016) (Lactobacillus reuteri).